A 397-amino-acid polypeptide reads, in one-letter code: Acetate kinase (397 aa).

Asn-7 is a binding site for Mg(2+). An ATP-binding site is contributed by Lys-14. Position 91 (Arg-91) interacts with substrate. Asp-148 (proton donor/acceptor) is an active-site residue. ATP-binding positions include 208–212 (HIGNG), 283–285 (DMR), and 331–335 (GVGEN). Residue Glu-384 coordinates Mg(2+).

This sequence belongs to the acetokinase family. Homodimer. Requires Mg(2+) as cofactor. The cofactor is Mn(2+).

It localises to the cytoplasm. The enzyme catalyses acetate + ATP = acetyl phosphate + ADP. Its pathway is metabolic intermediate biosynthesis; acetyl-CoA biosynthesis; acetyl-CoA from acetate: step 1/2. Functionally, catalyzes the formation of acetyl phosphate from acetate and ATP. Can also catalyze the reverse reaction. This chain is Acetate kinase, found in Azobacteroides pseudotrichonymphae genomovar. CFP2.